The chain runs to 316 residues: Pantothenate kinase (316 aa).

An ATP-binding site is contributed by 95–102 (GSVAVGKS).

Belongs to the prokaryotic pantothenate kinase family.

It is found in the cytoplasm. It carries out the reaction (R)-pantothenate + ATP = (R)-4'-phosphopantothenate + ADP + H(+). Its pathway is cofactor biosynthesis; coenzyme A biosynthesis; CoA from (R)-pantothenate: step 1/5. In Shewanella putrefaciens (strain CN-32 / ATCC BAA-453), this protein is Pantothenate kinase.